Here is a 295-residue protein sequence, read N- to C-terminus: Ribosomal protein L11 methyltransferase (295 aa).

S-adenosyl-L-methionine is bound by residues T139, G166, D188, and N231.

It belongs to the methyltransferase superfamily. PrmA family.

It is found in the cytoplasm. The catalysed reaction is L-lysyl-[protein] + 3 S-adenosyl-L-methionine = N(6),N(6),N(6)-trimethyl-L-lysyl-[protein] + 3 S-adenosyl-L-homocysteine + 3 H(+). Its function is as follows. Methylates ribosomal protein L11. The chain is Ribosomal protein L11 methyltransferase from Cyanothece sp. (strain PCC 7425 / ATCC 29141).